We begin with the raw amino-acid sequence, 345 residues long: 4-hydroxyproline 2-epimerase 1 (345 aa).

Glutamine 85 contacts substrate. The Proton acceptor role is filled by serine 93. Substrate is bound by residues 94–95 (GS) and aspartate 251. Cysteine 255 serves as the catalytic Proton donor. Residue 256 to 257 (GT) participates in substrate binding.

Belongs to the proline racemase family.

The enzyme catalyses trans-4-hydroxy-L-proline = cis-4-hydroxy-D-proline. Catalyzes the epimerization of trans-4-hydroxy-L-proline (t4LHyp) to cis-4-hydroxy-D-proline (c4DHyp). May be involved in a degradation pathway of t4LHyp. Can also catalyze the epimerization of trans-3-hydroxy-L-proline (t3LHyp) to cis-3-hydroxy-D-proline (c3DHyp) in vitro. Displays no proline racemase activity. In Rhizobium rhizogenes (strain K84 / ATCC BAA-868) (Agrobacterium radiobacter), this protein is 4-hydroxyproline 2-epimerase 1.